The following is a 234-amino-acid chain: Chalcone--flavanone isomerase 2 (234 aa).

Substrate is bound by residues Thr50, Asn115, and Ser192.

The protein belongs to the chalcone isomerase family.

The enzyme catalyses a chalcone = a flavanone.. It participates in secondary metabolite biosynthesis; flavonoid biosynthesis. In terms of biological role, catalyzes the intramolecular cyclization of bicyclic chalcones into tricyclic (S)-flavanones. Responsible for the isomerization of 4,2',4',6'-tetrahydroxychalcone (also termed chalcone) into naringenin. The polypeptide is Chalcone--flavanone isomerase 2 (CHI2) (Vitis vinifera (Grape)).